The primary structure comprises 254 residues: Ribosomal RNA small subunit methyltransferase G (254 aa).

Residues Gly-92, Ala-143 to Glu-144, and Arg-156 contribute to the S-adenosyl-L-methionine site.

The protein belongs to the methyltransferase superfamily. RNA methyltransferase RsmG family.

Its subcellular location is the cytoplasm. Specifically methylates the N7 position of a guanine in 16S rRNA. This chain is Ribosomal RNA small subunit methyltransferase G, found in Leptospira interrogans serogroup Icterohaemorrhagiae serovar copenhageni (strain Fiocruz L1-130).